Reading from the N-terminus, the 531-residue chain is Ultra-long-chain fatty acid omega-hydroxylase (531 aa).

The Lumenal segment spans residues 1-22 (MLPITDRLLHLLGLEKTAFRIY). The helical transmembrane segment at 23 to 43 (AVSTLLLFLLFFLFRLLLRFL) threads the bilayer. Topologically, residues 44 to 531 (RLCRSFYITC…LKVEPLPPRA (488 aa)) are cytoplasmic. Heme is bound by residues E335 and C475.

This sequence belongs to the cytochrome P450 family. Requires heme as cofactor.

The protein localises to the endoplasmic reticulum membrane. It localises to the microsome membrane. It carries out the reaction triacontanoate + reduced [NADPH--hemoprotein reductase] + O2 = omega-hydroxy-triacontanoate + oxidized [NADPH--hemoprotein reductase] + H2O + H(+). It catalyses the reaction an omega-methyl-ultra-long-chain fatty acid + reduced [NADPH--hemoprotein reductase] + O2 = an omega-hydroxy-ultra-long-chain fatty acid + oxidized [NADPH--hemoprotein reductase] + H2O + H(+). In terms of biological role, a cytochrome P450 monooxygenase involved in epidermal ceramide biosynthesis. Hydroxylates the terminal carbon (omega-hydroxylation) of ultra-long-chain fatty acyls (C28-C36) prior to ceramide synthesis. Contributes to the synthesis of three classes of omega-hydroxy-ultra-long chain fatty acylceramides having sphingosine, 6-hydroxysphingosine and phytosphingosine bases, all major lipid components that underlie the permeability barrier of the stratum corneum. Mechanistically, uses molecular oxygen inserting one oxygen atom into a substrate, and reducing the second into a water molecule, with two electrons provided by NADPH via cytochrome P450 reductase (CPR; NADPH-ferrihemoprotein reductase). This is Ultra-long-chain fatty acid omega-hydroxylase from Homo sapiens (Human).